We begin with the raw amino-acid sequence, 807 residues long: Glycerol-3-phosphate acyltransferase (807 aa).

Residues 308 to 313 carry the HXXXXD motif motif; sequence CHRSHM.

Belongs to the GPAT/DAPAT family.

The protein localises to the cell inner membrane. It catalyses the reaction sn-glycerol 3-phosphate + an acyl-CoA = a 1-acyl-sn-glycero-3-phosphate + CoA. Its pathway is phospholipid metabolism; CDP-diacylglycerol biosynthesis; CDP-diacylglycerol from sn-glycerol 3-phosphate: step 1/3. The polypeptide is Glycerol-3-phosphate acyltransferase (Shewanella putrefaciens (strain CN-32 / ATCC BAA-453)).